A 683-amino-acid chain; its full sequence is U4/U6 small nuclear ribonucleoprotein Prp3 (683 aa).

Positions 1–87 constitute a PWI domain; that stretch reads MALSKRELDE…HSKSSSDRSR (87 aa). Residues 73-107 show a composition bias toward basic and acidic residues; sequence GRSSRHSKSSSDRSRKRELKEVFGDDSEISKESSG. Positions 73–135 are disordered; sequence GRSSRHSKSS…IPGPPSESPG (63 aa). A Glycyl lysine isopeptide (Lys-Gly) (interchain with G-Cter in SUMO2) cross-link involves residue lysine 139. The disordered stretch occupies residues 153–183; sequence IEERKKQLSFISPPTPQPKTPSSSQPERLPI. Serine 164 carries the phosphoserine modification. Threonine 167 is subject to Phosphothreonine. Residues lysine 244 and lysine 252 each participate in a glycyl lysine isopeptide (Lys-Gly) (interchain with G-Cter in SUMO2) cross-link. A mediates interaction with SART3 region spans residues 416–550; sequence NLVEHPAQLN…VHISVYRVRN (135 aa). The residue at position 619 (serine 619) is a Phosphoserine.

As to quaternary structure, component of the precatalytic spliceosome (spliceosome B complex). Component of the U4/U6-U5 tri-snRNP complex, a building block of the precatalytic spliceosome (spliceosome B complex). The U4/U6-U5 tri-snRNP complex is composed of the U4, U6 and U5 snRNAs and at least PRPF3, PRPF4, PRPF6, PRPF8, PRPF31, SNRNP200, TXNL4A, SNRNP40, SNRPB, SNRPD1, SNRPD2, SNRPD3, SNRPE, SNRPF, SNRPG, DDX23, CD2BP2, PPIH, SNU13, EFTUD2, SART1 and USP39, plus LSM2, LSM3, LSM4, LSM5, LSM6, LSM7 and LSM8. Interacts directly with PRPF4. Part of a heteromeric complex containing PPIH, PRPF3 and PRPF4 that is stable in the absence of RNA. Interacts with SART3; the interaction is direct and recruits the deubiquitinase USP4 to PRPF3. Interacts with PRPF19. Interacts ('Lys-63'-linked polyubiquitinated) with PRPF8 (via the MPN (JAB/Mov34) domain); may stabilize the U4/U6-U5 tri-snRNP complex. Interacts with ERCC6. Ubiquitinated. Undergoes 'Lys-63'-linked polyubiquitination by PRPF19 and deubiquitination by USP4. 'Lys-63'-linked ubiquitination increases the affinity for PRPF8 and may regulate the assembly of the U4/U6-U5 tri-snRNP complex.

The protein localises to the nucleus. The protein resides in the nucleus speckle. In terms of biological role, plays a role in pre-mRNA splicing as component of the U4/U6-U5 tri-snRNP complex that is involved in spliceosome assembly, and as component of the precatalytic spliceosome (spliceosome B complex). This is U4/U6 small nuclear ribonucleoprotein Prp3 (PRPF3) from Pongo abelii (Sumatran orangutan).